Consider the following 125-residue polypeptide: MORF4 family-associated protein 1 (125 aa).

The segment at 76–99 (ESALNHLQGAGGAEPRGPRAEKAD) is disordered. The stretch at 94–124 (RAEKADEKAQEMAKMAEMLVQLVRRIEKSES) forms a coiled coil.

It belongs to the MORF4 family-associated protein family. Found in a complex composed of MORF4L1, MRFAP1 and RB1. Interacts via its N-terminus with MORF4L1. Interacts with CSTB and MORF4L2.

It is found in the nucleus. Its subcellular location is the cytoplasm. The protein resides in the perinuclear region. The sequence is that of MORF4 family-associated protein 1 from Rattus norvegicus (Rat).